The following is a 471-amino-acid chain: UDP-N-acetylmuramate--L-alanine ligase (471 aa).

Residue G114 to T120 participates in ATP binding.

The protein belongs to the MurCDEF family.

The protein localises to the cytoplasm. The catalysed reaction is UDP-N-acetyl-alpha-D-muramate + L-alanine + ATP = UDP-N-acetyl-alpha-D-muramoyl-L-alanine + ADP + phosphate + H(+). The protein operates within cell wall biogenesis; peptidoglycan biosynthesis. Its function is as follows. Cell wall formation. The protein is UDP-N-acetylmuramate--L-alanine ligase of Allorhizobium ampelinum (strain ATCC BAA-846 / DSM 112012 / S4) (Agrobacterium vitis (strain S4)).